Reading from the N-terminus, the 254-residue chain is MVPWLDPNDPFPPVERALGPATGAPGLLAASADLLPSRLIDAYLRGIFPWYSDGQPVLWWSPDPRMILAPAEFKVSPSLRKTLKRVLRDAAWEVRVDHDFAGVMRACAQAPRRGQRGTWITAEIIDAYTSLHRSGNAHSIETWHDGRRVGGLYGVAFGRMFFGESMYADATDASKIALATLVAHLRDQGLEMIDCQQNTSHLASLGGREIARKAFVAHVRRAAAEPPIPWQFDKRALAALTGPAGAAAPRGIER.

The protein belongs to the L/F-transferase family.

It is found in the cytoplasm. It carries out the reaction N-terminal L-lysyl-[protein] + L-leucyl-tRNA(Leu) = N-terminal L-leucyl-L-lysyl-[protein] + tRNA(Leu) + H(+). It catalyses the reaction N-terminal L-arginyl-[protein] + L-leucyl-tRNA(Leu) = N-terminal L-leucyl-L-arginyl-[protein] + tRNA(Leu) + H(+). The enzyme catalyses L-phenylalanyl-tRNA(Phe) + an N-terminal L-alpha-aminoacyl-[protein] = an N-terminal L-phenylalanyl-L-alpha-aminoacyl-[protein] + tRNA(Phe). Its function is as follows. Functions in the N-end rule pathway of protein degradation where it conjugates Leu, Phe and, less efficiently, Met from aminoacyl-tRNAs to the N-termini of proteins containing an N-terminal arginine or lysine. This Burkholderia vietnamiensis (strain G4 / LMG 22486) (Burkholderia cepacia (strain R1808)) protein is Leucyl/phenylalanyl-tRNA--protein transferase.